The following is a 241-amino-acid chain: 7-cyano-7-deazaguanine synthase (241 aa).

An ATP-binding site is contributed by 15 to 25 (FSGGQDSTTTL). Residues Cys-203, Cys-218, Cys-221, and Cys-224 each coordinate Zn(2+).

The protein belongs to the QueC family. Zn(2+) is required as a cofactor.

The catalysed reaction is 7-carboxy-7-deazaguanine + NH4(+) + ATP = 7-cyano-7-deazaguanine + ADP + phosphate + H2O + H(+). It functions in the pathway purine metabolism; 7-cyano-7-deazaguanine biosynthesis. In terms of biological role, catalyzes the ATP-dependent conversion of 7-carboxy-7-deazaguanine (CDG) to 7-cyano-7-deazaguanine (preQ(0)). The sequence is that of 7-cyano-7-deazaguanine synthase from Azorhizobium caulinodans (strain ATCC 43989 / DSM 5975 / JCM 20966 / LMG 6465 / NBRC 14845 / NCIMB 13405 / ORS 571).